The following is a 62-amino-acid chain: Large ribosomal subunit protein uL30 (62 aa).

This sequence belongs to the universal ribosomal protein uL30 family. As to quaternary structure, part of the 50S ribosomal subunit.

The polypeptide is Large ribosomal subunit protein uL30 (Marinobacter nauticus (strain ATCC 700491 / DSM 11845 / VT8) (Marinobacter aquaeolei)).